The chain runs to 466 residues: 55 kDa erythrocyte membrane protein (466 aa).

Position 2 is an N-acetylthreonine (Thr-2). Ser-19 bears the Phosphoserine mark. Thr-49 carries the post-translational modification Phosphothreonine. Ser-57 and Ser-110 each carry phosphoserine. The PDZ domain maps to 71–152 (LIQFEKVTEE…MISLKVIPNQ (82 aa)). Positions 158–228 (ALQMFMRAQF…PSPELQEWRV (71 aa)) constitute an SH3 domain. Ser-243 is modified (phosphoserine). Residues 268–466 (VVSYEEVVRL…PQWVPVSWVY (199 aa)) form an interaction with PALS1 region. Positions 282 to 451 (RKTLVLIGAS…TLKTLQETFD (170 aa)) constitute a Guanylate kinase-like domain.

It belongs to the MAGUK family. Heterodimer with PALS1. Interacts with DLG5 and NF2. Interacts (via guanylate kinase-like domain) with WHRN (via third PDZ domain). Interacts with PALS1. Post-translationally, palmitoylated.

It is found in the cell membrane. The protein resides in the cell projection. It localises to the stereocilium. Functionally, essential regulator of neutrophil polarity. Regulates neutrophil polarization by regulating AKT1 phosphorylation through a mechanism that is independent of PIK3CG activity. This chain is 55 kDa erythrocyte membrane protein (MPP1), found in Bos taurus (Bovine).